The sequence spans 480 residues: MNRVHIKTYGCQMNERDSEAVAAMLRARGYRIVADENDCDILLLNTCSVRDAAEQKAIGKAGYLQQRKKKQPDFVLGILGCMAQNRGASLLDQLPDVDLIVGTQKFHQVPGYLDNLRAARDAGVPIGETIVDIGEEAGSQNTIKDHLLPQDSDSDSQPSTLNSQLRGAAAPPPQITAFVSIQQGCNMDCAFCIVPKTRGDERSRPMDDIVRECEQLAARGVREVTLLGQIVTSYGRRDYTHTNGISPFVQLLERVHALDGIERIRFTSPHPRGFKDDLVAAYGRLPKLCGYVHLPLQSGSNRILRAMNRPYTRERYREIVDALRAVRSDMYFSTDVIVGFPGETDEDFEQTRELFEACNYDMAYVFKYSVRTGTPAAERGDQVPEDVKEQRNQLLLELLRQNSERRNALLLDTVEEVLVEGPDKTGQRFTGRTRGNRVCIFEATPDLVGRLVSLRITRASVSTLYGELMLAGVGRERNRK.

The region spanning 2-118 (NRVHIKTYGC…VPGYLDNLRA (117 aa)) is the MTTase N-terminal domain. The [4Fe-4S] cluster site is built by Cys-11, Cys-47, and Cys-81. Positions 145-169 (DHLLPQDSDSDSQPSTLNSQLRGAA) are disordered. Residues 149–159 (PQDSDSDSQPS) show a composition bias toward low complexity. The Radical SAM core domain maps to 171–405 (PPPQITAFVS…LELLRQNSER (235 aa)). Positions 185, 189, and 192 each coordinate [4Fe-4S] cluster. The TRAM domain occupies 408 to 470 (ALLLDTVEEV…VSTLYGELML (63 aa)).

The protein belongs to the methylthiotransferase family. MiaB subfamily. Monomer. Requires [4Fe-4S] cluster as cofactor.

It localises to the cytoplasm. It carries out the reaction N(6)-dimethylallyladenosine(37) in tRNA + (sulfur carrier)-SH + AH2 + 2 S-adenosyl-L-methionine = 2-methylsulfanyl-N(6)-dimethylallyladenosine(37) in tRNA + (sulfur carrier)-H + 5'-deoxyadenosine + L-methionine + A + S-adenosyl-L-homocysteine + 2 H(+). Its function is as follows. Catalyzes the methylthiolation of N6-(dimethylallyl)adenosine (i(6)A), leading to the formation of 2-methylthio-N6-(dimethylallyl)adenosine (ms(2)i(6)A) at position 37 in tRNAs that read codons beginning with uridine. The chain is tRNA-2-methylthio-N(6)-dimethylallyladenosine synthase from Opitutus terrae (strain DSM 11246 / JCM 15787 / PB90-1).